The primary structure comprises 479 residues: Aldehyde dehydrogenase family 3 member B3 (479 aa).

Active-site residues include glutamate 223 and cysteine 257. Cysteine 476 carries S-geranylgeranyl cysteine lipidation. The propeptide at threonine 477–leucine 479 is removed in mature form.

Belongs to the aldehyde dehydrogenase family. Geranylgeranylation is important for membrane localization and enzyme activity. Expressed in testis, kidney, small intestine, spleen, white adipose tissue, liver and lung.

It localises to the cell membrane. It catalyses the reaction an aldehyde + NAD(+) + H2O = a carboxylate + NADH + 2 H(+). The enzyme catalyses hexadecanoate + NADH + 2 H(+) = hexadecanal + NAD(+) + H2O. It carries out the reaction octanal + NAD(+) + H2O = octanoate + NADH + 2 H(+). Its function is as follows. Oxidizes medium and long chain aldehydes into non-toxic fatty acids. The protein is Aldehyde dehydrogenase family 3 member B3 of Mus musculus (Mouse).